The primary structure comprises 287 residues: Putative glutamate--cysteine ligase regulatory subunit (287 aa).

This sequence belongs to the aldo/keto reductase family. Glutamate--cysteine ligase light chain subfamily. As to quaternary structure, heterodimer of a catalytic heavy chain and a regulatory light chain.

It localises to the cytoplasm. Its pathway is sulfur metabolism; glutathione biosynthesis; glutathione from L-cysteine and L-glutamate: step 1/2. The polypeptide is Putative glutamate--cysteine ligase regulatory subunit (Schizosaccharomyces pombe (strain 972 / ATCC 24843) (Fission yeast)).